Reading from the N-terminus, the 418-residue chain is Serine hydroxymethyltransferase (418 aa).

(6S)-5,6,7,8-tetrahydrofolate is bound by residues Leu121 and 125 to 127 (GHL). Lys230 is modified (N6-(pyridoxal phosphate)lysine). Residue 355–357 (SPF) participates in (6S)-5,6,7,8-tetrahydrofolate binding.

Belongs to the SHMT family. As to quaternary structure, homodimer. Requires pyridoxal 5'-phosphate as cofactor.

It localises to the cytoplasm. It catalyses the reaction (6R)-5,10-methylene-5,6,7,8-tetrahydrofolate + glycine + H2O = (6S)-5,6,7,8-tetrahydrofolate + L-serine. It participates in one-carbon metabolism; tetrahydrofolate interconversion. It functions in the pathway amino-acid biosynthesis; glycine biosynthesis; glycine from L-serine: step 1/1. Its function is as follows. Catalyzes the reversible interconversion of serine and glycine with tetrahydrofolate (THF) serving as the one-carbon carrier. This reaction serves as the major source of one-carbon groups required for the biosynthesis of purines, thymidylate, methionine, and other important biomolecules. Also exhibits THF-independent aldolase activity toward beta-hydroxyamino acids, producing glycine and aldehydes, via a retro-aldol mechanism. This chain is Serine hydroxymethyltransferase, found in Streptococcus agalactiae serotype V (strain ATCC BAA-611 / 2603 V/R).